Here is a 1122-residue protein sequence, read N- to C-terminus: MDKSAATNSATADGQNEAAAAAAAAATAAGCGSNNSSSTSSSNNTANSNNALQRLATTTSAVVASPMTINLNISTTTGGNFGVSVEPHISVESLKKIIAKKLKVAKDRICLLHREKELQDGTLRDHNLMDGSKIILIPNVETGLLAQRPENTVMQALESLNDAQVNDFLSGKTPLNLSMRLGDHMMLIQLQLSTVNPAGGGAATVAPVAGGASGSSINAAASTTSTVPVMPAGTGCSGANSTSLSSSAVLAAAAAGVGGSTGTSGSGTSSSSSSTSSSSSSSSSSSRTRSSGQRSSGRIGHGHVHSHQHPSLHAANWHGFSHGHGHGHSHGNGHGHHHHHHHHHHHHHHHHNASAVAAGSGGGMSSLRKMYGDLPSSSGASGSAPATGTGQSQSSSTLNGPDLTKLLIKGGIQNIVNSFALKDAGANARPVANGGSGSSPGKPVLEQSPIKSLSNLVSSPIKMTTIKNIPLPTTAATSSSSSCNCSSAAPSSSSSTSSGACATGGCQQDPIAAKLTSCLCTRLPTPSVAPPVATLVAPAPVARSGSTSSPSKCPESSCSGANAGFAARSTLAGTRVTFSGNSMLHKTGNNRITRTKHRHYHGQGHGHGHGNGHSSSSSSSSSSSSSHFFNHACAGNQPSVNAAAFATSSSSSSSSPSSSSSSPSKRRKLEQGMGAGAVGATAATATAAATVALPASTSATTAEPDDSLLGVSDTRTLAEASRNLTQTLRKLSKEVFTNKIDLSGAGVVSSGRSSSSGATSSGAASGEEAPRKSGSGAVIESMKNHGKGIYSGTFSGTLNPALQDRFGRPKRDISTVIHILNDLLSATPQYGRGARISFEAPTTGSVSGSGSGSGSSGSSSTTSSGSGLHHGSRSKMYSSKHHNCAKCNSRAQQQQQQSATLASGSGGSCSFRDCPSYHSSSAATKASTSSKSSSHSCCQTAEAPSSMTSQSNGCTCRYRRDDGQGEREREHTCQKCTVELANMKTRSKMDQLRLVMQQHKQKREARKLKSGPYATAASASAADSLSSIAAGGTAAVPMGAAAQYSAVSALVATPLQPAAVPVQTGKAAPANSITGNSSNANVNGNTSTAPATAATSAAAAPTAAPPSEVSPNHIVEEVDTAA.

A Ubiquitin-like domain is found at 69–143; the sequence is INLNISTTTG…IILIPNVETG (75 aa). A required for interaction with Pc region spans residues 210-300; sequence GGASGSSINA…SGQRSSGRIG (91 aa). 8 disordered regions span residues 257 to 399, 596 to 630, 645 to 677, 746 to 775, 840 to 876, 886 to 905, 922 to 955, and 1067 to 1122; these read VGGS…STLN, KHRHYHGQGHGHGHGNGHSSSSSSSSSSSSSHFFN, FATSSSSSSSSPSSSSSSPSKRRKLEQGMGAGA, GVVSSGRSSSSGATSSGAASGEEAPRKSGS, APTTGSVSGSGSGSGSSGSSSTTSSGSGLHHGSRSKM, KCNSRAQQQQQQSATLASGS, AATKASTSSKSSSHSCCQTAEAPSSMTSQSNGCT, and AAPA…DTAA. Over residues 266-298 the composition is skewed to low complexity; the sequence is SGTSSSSSSTSSSSSSSSSSSRTRSSGQRSSGR. Composition is skewed to basic residues over residues 300-310 and 321-352; these read GHGHVHSHQHP and SHGHGHGHSHGNGHGHHHHHHHHHHHHHHHHN. Over residues 375-397 the composition is skewed to low complexity; it reads PSSSGASGSAPATGTGQSQSSST. Residues 596 to 610 show a composition bias toward basic residues; that stretch reads KHRHYHGQGHGHGHG. Low complexity-rich tracts occupy residues 612-627, 648-663, 746-766, 856-867, 889-903, and 922-936; these read GHSSSSSSSSSSSSSH, SSSSSSSSPSSSSSSP, GVVSSGRSSSSGATSSGAASG, SGSSSTTSSGSG, SRAQQQQQQSATLAS, and AATKASTSSKSSSHS. Composition is skewed to polar residues over residues 937-954 and 1071-1085; these read CCQTAEAPSSMTSQSNGC and NSITGNSSNANVNGN. A compositionally biased stretch (low complexity) spans 1086 to 1107; sequence TSTAPATAATSAAAAPTAAPPS.

As to quaternary structure, interacts with PRC1 complex member polycomb protein Pc; the interaction targets Pc for ubiquitin-independent proteasomal degradation. Does not interact with PRC1 members Ph, Psc or Sce so does not appear to be a member of the PRC1 complex. Interacts with 26S proteasome regulatory subunit Rpn10.

Its subcellular location is the nucleus. In terms of biological role, facilitates ubiquitin-independent proteasomal degradation of polycomb protein Pc by interacting directly with the proteasome and recruiting Pc to it. The sequence is that of Midnolin homolog from Drosophila melanogaster (Fruit fly).